The chain runs to 179 residues: Probable RNA 2'-phosphotransferase (179 aa).

This sequence belongs to the KptA/TPT1 family.

In terms of biological role, removes the 2'-phosphate from RNA via an intermediate in which the phosphate is ADP-ribosylated by NAD followed by a presumed transesterification to release the RNA and generate ADP-ribose 1''-2''-cyclic phosphate (APPR&gt;P). May function as an ADP-ribosylase. The protein is Probable RNA 2'-phosphotransferase of Fusobacterium nucleatum subsp. nucleatum (strain ATCC 25586 / DSM 15643 / BCRC 10681 / CIP 101130 / JCM 8532 / KCTC 2640 / LMG 13131 / VPI 4355).